The primary structure comprises 981 residues: Amidohydrolase tasK (981 aa).

The interval 1–36 (MDDQKGPLPPYTPTATAPPPASMRQRRPPGRRRALR) is disordered. The span at 7–21 (PLPPYTPTATAPPPA) shows a compositional bias: pro residues. The span at 24–36 (RQRRPPGRRRALR) shows a compositional bias: basic residues. A helical membrane pass occupies residues 40–57 (TVRVLALACLAFVVLAQW). The disordered stretch occupies residues 86–107 (LRVRPQDPAGPGRSKNDRYLDG). Fe(2+) contacts are provided by His-187 and His-189. Zn(2+)-binding residues include His-187 and His-189. An N-linked (GlcNAc...) asparagine glycan is attached at Asn-407. The disordered stretch occupies residues 819–838 (KKQQKQQQQQQQQQQQQHGT). Low complexity predominate over residues 823–835 (KQQQQQQQQQQQQ). N-linked (GlcNAc...) asparagine glycosylation occurs at Asn-891.

It belongs to the metallo-dependent hydrolases superfamily. Fe(2+) is required as a cofactor. The cofactor is Mn(2+). Requires Zn(2+) as cofactor.

Its subcellular location is the membrane. In terms of biological role, amidohydrolase; part of the gene cluster that mediates the biosynthesis of the tetramic acids Sch210971 and Sch210972, potential anti-HIV fungal natural product that contain a decalin core. The PKS module of tasS together with the enoylreductase tasC catalyze the formation of the polyketide unit which is then conjugated to 4-hydroxyl-4-methyl glutamate (HMG) by the condensation domain of the tasS NRPS module. One unique structural feature of Sch210971 and Sch210972 is the tetramic acid motif proposed to be derived from the non-proteinogenic amino acid HMG, by a Dieckmann-type condensation catalyzed by the reductase domain of tasS. The aldolase tasA catalyzes the aldol condensation of 2 molecules of pyruvic acid to yield the intermediate 4-hydroxyl-4-methyl-2-oxoglutarate (HMOG), which can then be stereoselectively transaminated, may be by tasG, to form HMG. The Diels-Alderase tas3 then uses the Dieckmann product of tasS as substrate and catalyzes the Diels-Alder cycloaddition to form the decalin ring of Sch210971 and Sch210972. This chain is Amidohydrolase tasK, found in Hapsidospora irregularis.